We begin with the raw amino-acid sequence, 189 residues long: Putative manganese efflux pump MntP (189 aa).

The next 6 helical transmembrane spans lie at 3–23 (PISLLFLALAMSTDAFAAALG), 41–61 (LIFGAIETITPVIGWGIGQVA), 69–89 (DHWIAFTLLLVLGLHMIYNGI), 105–125 (FWILAVTAFATSIDALAVGVG), 133–153 (IVIAALAIGLATTVMVTIGVM), and 168–188 (IVGGIVLIIVGATILYEHLSA).

The protein belongs to the MntP (TC 9.B.29) family.

It localises to the cell inner membrane. In terms of biological role, probably functions as a manganese efflux pump. In Pseudomonas savastanoi pv. phaseolicola (strain 1448A / Race 6) (Pseudomonas syringae pv. phaseolicola (strain 1448A / Race 6)), this protein is Putative manganese efflux pump MntP.